The following is a 682-amino-acid chain: tRNA(Met) cytidine acetyltransferase TmcA (682 aa).

ATP-binding positions include glutamine 176, 198–207 (GRGKSTLAGM), and arginine 320. In terms of domain architecture, N-acetyltransferase spans 357-534 (QQQWIQQPEL…SGCYTAMAIF (178 aa)). Acetyl-CoA-binding positions include 462–464 (VAV) and glutamate 502.

This sequence belongs to the RNA cytidine acetyltransferase family. TmcA subfamily.

The protein localises to the cytoplasm. It catalyses the reaction cytidine(34) in elongator tRNA(Met) + acetyl-CoA + ATP + H2O = N(4)-acetylcytidine(34) in elongator tRNA(Met) + ADP + phosphate + CoA + H(+). Its function is as follows. Catalyzes the formation of N(4)-acetylcytidine (ac(4)C) at the wobble position of tRNA(Met), by using acetyl-CoA as an acetyl donor and ATP (or GTP). This is tRNA(Met) cytidine acetyltransferase TmcA from Photorhabdus asymbiotica subsp. asymbiotica (strain ATCC 43949 / 3105-77) (Xenorhabdus luminescens (strain 2)).